A 254-amino-acid polypeptide reads, in one-letter code: Bidirectional sugar transporter SWEET6b (254 aa).

Over 1–9 (MISPDAARN) the chain is Extracellular. A helical membrane pass occupies residues 10 to 30 (VVGIIGNVISFGLFLAPVPTF). Residues 10–98 (VVGIIGNVIS…IFFLYSPNKK (89 aa)) enclose the MtN3/slv 1 domain. Residues 31-45 (WRICKRKDVEEFKAD) are Cytoplasmic-facing. A helical transmembrane segment spans residues 46 to 66 (PYLATLLNCMLWVFYGIPIVH). Residues 67–69 (PNS) are Extracellular-facing. Residues 70–90 (ILVVTINGIGLVVEGTYLFIF) form a helical membrane-spanning segment. The Cytoplasmic segment spans residues 91-101 (FLYSPNKKRLR). A helical membrane pass occupies residues 102 to 122 (MLAVLGVELVFMLAVILGVLL). Residues 123-131 (GAHTHKKRS) are Extracellular-facing. The chain crosses the membrane as a helical span at residues 132–152 (MIVGILCVFFGSIMYFSPLTI). A MtN3/slv 2 domain is found at 133–216 (IVGILCVFFG…LILYACYYRT (84 aa)). Residues 153–165 (MGKVIKTKSVEYM) are Cytoplasmic-facing. A helical membrane pass occupies residues 166-186 (PFFLSLVCFLNGVCWTAYALI). Topologically, residues 187–189 (RFD) are extracellular. Residues 190–210 (IYVTIPNSLGAIFGAIQLILY) traverse the membrane as a helical segment. Topologically, residues 211–254 (ACYYRTTPKKTKAAKDVEMPSVISGPGAAATASGGSVVSVTVER) are cytoplasmic.

It belongs to the SWEET sugar transporter family. Forms homooligomers and/or heterooligomers.

It localises to the cell membrane. Functionally, mediates both low-affinity uptake and efflux of sugar across the plasma membrane. The polypeptide is Bidirectional sugar transporter SWEET6b (SWEET6B) (Oryza sativa subsp. indica (Rice)).